Consider the following 216-residue polypeptide: Octanoyltransferase (216 aa).

One can recognise a BPL/LPL catalytic domain in the interval 35–213 (NSNPDFIWIG…TIEEEFNFDF (179 aa)). Substrate-binding positions include 77 to 84 (RGGEVTCH), 144 to 146 (SIG), and 157 to 159 (GFS). The active-site Acyl-thioester intermediate is the Cys-175.

Belongs to the LipB family.

It localises to the cytoplasm. The catalysed reaction is octanoyl-[ACP] + L-lysyl-[protein] = N(6)-octanoyl-L-lysyl-[protein] + holo-[ACP] + H(+). It participates in protein modification; protein lipoylation via endogenous pathway; protein N(6)-(lipoyl)lysine from octanoyl-[acyl-carrier-protein]: step 1/2. Functionally, catalyzes the transfer of endogenously produced octanoic acid from octanoyl-acyl-carrier-protein onto the lipoyl domains of lipoate-dependent enzymes. Lipoyl-ACP can also act as a substrate although octanoyl-ACP is likely to be the physiological substrate. The polypeptide is Octanoyltransferase (Prochlorococcus marinus (strain MIT 9301)).